The following is a 279-amino-acid chain: Zinc-finger homeodomain protein 1 (279 aa).

Residues 1–13 are compositionally biased toward acidic residues; it reads MDFDDHDDGDEEM. Positions 1–47 are disordered; it reads MDFDDHDDGDEEMPPMPVSSSYETPPQHGLAGGGMAPKPPGEIGSHV. A ZF-HD dimerization-type; degenerate zinc finger spans residues 57-106; the sequence is YRECLKNHAVGIGGHAVDGCGEFMAAGEEGTIDALRCAACNCHRNFHRKE. Residues 157 to 191 form a disordered region; it reads AAAAAAGGHPQRPLALPSTSHSGRDDGDDLSGMVG. A DNA-binding region (homeobox) is located at residues 215–278; it reads KKRFRTKFTQ…NNKHTLGKKL (64 aa).

In terms of assembly, homo- and heterodimer with other ZFHD proteins.

The protein resides in the nucleus. In terms of biological role, putative transcription factor. This chain is Zinc-finger homeodomain protein 1 (ZHD1), found in Oryza sativa subsp. indica (Rice).